The sequence spans 164 residues: Cyclic pyranopterin monophosphate synthase (164 aa).

Substrate is bound by residues Met75–His77 and Met116–Glu117. Asp131 is a catalytic residue.

The protein belongs to the MoaC family. Homohexamer; trimer of dimers.

The catalysed reaction is (8S)-3',8-cyclo-7,8-dihydroguanosine 5'-triphosphate = cyclic pyranopterin phosphate + diphosphate. Its pathway is cofactor biosynthesis; molybdopterin biosynthesis. In terms of biological role, catalyzes the conversion of (8S)-3',8-cyclo-7,8-dihydroguanosine 5'-triphosphate to cyclic pyranopterin monophosphate (cPMP). The polypeptide is Cyclic pyranopterin monophosphate synthase (Staphylococcus aureus (strain Mu3 / ATCC 700698)).